Here is a 200-residue protein sequence, read N- to C-terminus: Pyridoxal 5'-phosphate synthase subunit PdxT (200 aa).

52–54 contacts L-glutamine; that stretch reads GES. The Nucleophile role is filled by C84. L-glutamine contacts are provided by residues R116 and 145-146; that span reads IR. Residues H181 and E183 each act as charge relay system in the active site.

It belongs to the glutaminase PdxT/SNO family. As to quaternary structure, in the presence of PdxS, forms a dodecamer of heterodimers. Only shows activity in the heterodimer.

It carries out the reaction aldehydo-D-ribose 5-phosphate + D-glyceraldehyde 3-phosphate + L-glutamine = pyridoxal 5'-phosphate + L-glutamate + phosphate + 3 H2O + H(+). The catalysed reaction is L-glutamine + H2O = L-glutamate + NH4(+). The protein operates within cofactor biosynthesis; pyridoxal 5'-phosphate biosynthesis. Functionally, catalyzes the hydrolysis of glutamine to glutamate and ammonia as part of the biosynthesis of pyridoxal 5'-phosphate. The resulting ammonia molecule is channeled to the active site of PdxS. In Sulfolobus acidocaldarius (strain ATCC 33909 / DSM 639 / JCM 8929 / NBRC 15157 / NCIMB 11770), this protein is Pyridoxal 5'-phosphate synthase subunit PdxT.